The sequence spans 353 residues: Peroxisome assembly protein 12-B (353 aa).

The Peroxisomal matrix portion of the chain corresponds to 1–19 (MAERGAHITTTSPLDDRPS). Residues 20–47 (IFEVVAQESLMAAARPALHHIVKVLAES) form a helical membrane-spanning segment. The Cytoplasmic segment spans residues 48–51 (NPAR). A helical membrane pass occupies residues 52-76 (YGTLWRWFDELYTLLECLLQQHYLS). At 77–104 (WASASFSENFYGLKRVTLGKQVGQRNLA) the chain is on the peroxisomal matrix side. The helical transmembrane segment at 105–134 (RKEYWKSLLLLVLIPYLRIKLEKLVNSLRE) threads the bilayer. Residues 135-139 (EEDYS) lie on the Cytoplasmic side of the membrane. The chain crosses the membrane as a helical span at residues 140-178 (IQNPTSFHKRCYKAILASYPFLKLGWEAWFLFYQLRYIL). Residues 179–243 (WNGKHHSPLL…LGAVTLSVSS (65 aa)) are Peroxisomal matrix-facing. The helical transmembrane segment at 244 to 271 (SLSLGVFFLQFLDWWYSAENRETLKSLG) threads the bilayer. At 272-353 (NLPVPPPPIH…HLIKLYTPDG (82 aa)) the chain is on the cytoplasmic side. The Zn(2+) site is built by Cys-298, Cys-301, Cys-319, and Cys-322. The segment at 298–337 (CPLCRKVRVNDTALGTSGYVFCYRCAYYYVKTHQRCPVSG) adopts an RING-type; degenerate zinc-finger fold.

The protein belongs to the pex2/pex10/pex12 family. In terms of assembly, component of the PEX2-PEX10-PEX12 retrotranslocation channel.

The protein resides in the peroxisome membrane. Its pathway is protein modification; protein ubiquitination. Component of a retrotranslocation channel required for peroxisome organization by mediating export of the PEX5 receptor from peroxisomes to the cytosol, thereby promoting PEX5 recycling. The retrotranslocation channel is composed of PEX2, PEX10 and PEX12; each subunit contributing transmembrane segments that coassemble into an open channel that specifically allows the passage of PEX5 through the peroxisomal membrane. PEX12 also regulates PEX5 recycling by activating the E3 ubiquitin-protein ligase activity of PEX10. When PEX5 recycling is compromised, PEX12 stimulates PEX10-mediated polyubiquitination of PEX5, leading to its subsequent degradation. This Xenopus laevis (African clawed frog) protein is Peroxisome assembly protein 12-B.